We begin with the raw amino-acid sequence, 464 residues long: tRNA-2-methylthio-N(6)-dimethylallyladenosine synthase (464 aa).

One can recognise an MTTase N-terminal domain in the interval glycine 19–leucine 135. The [4Fe-4S] cluster site is built by cysteine 28, cysteine 64, cysteine 98, cysteine 170, cysteine 174, and cysteine 177. In terms of domain architecture, Radical SAM core spans arginine 156 to arginine 394. The region spanning glutamine 396–leucine 464 is the TRAM domain.

This sequence belongs to the methylthiotransferase family. MiaB subfamily. Monomer. Requires [4Fe-4S] cluster as cofactor.

Its subcellular location is the cytoplasm. It carries out the reaction N(6)-dimethylallyladenosine(37) in tRNA + (sulfur carrier)-SH + AH2 + 2 S-adenosyl-L-methionine = 2-methylsulfanyl-N(6)-dimethylallyladenosine(37) in tRNA + (sulfur carrier)-H + 5'-deoxyadenosine + L-methionine + A + S-adenosyl-L-homocysteine + 2 H(+). Functionally, catalyzes the methylthiolation of N6-(dimethylallyl)adenosine (i(6)A), leading to the formation of 2-methylthio-N6-(dimethylallyl)adenosine (ms(2)i(6)A) at position 37 in tRNAs that read codons beginning with uridine. The chain is tRNA-2-methylthio-N(6)-dimethylallyladenosine synthase from Prochlorococcus marinus (strain MIT 9301).